A 41-amino-acid polypeptide reads, in one-letter code: Photosystem II reaction center protein L (41 aa).

Residues 20–40 form a helical membrane-spanning segment; sequence SLYLGLLLVFVVGLLFSSYFL.

This sequence belongs to the PsbL family. As to quaternary structure, PSII is composed of 1 copy each of membrane proteins PsbA, PsbB, PsbC, PsbD, PsbE, PsbF, PsbH, PsbI, PsbJ, PsbK, PsbL, PsbM, PsbT, PsbX, PsbY, PsbZ, Psb30/Ycf12, peripheral proteins PsbO, CyanoQ (PsbQ), PsbU, PsbV and a large number of cofactors. It forms dimeric complexes.

It localises to the cellular thylakoid membrane. Functionally, one of the components of the core complex of photosystem II (PSII). PSII is a light-driven water:plastoquinone oxidoreductase that uses light energy to abstract electrons from H(2)O, generating O(2) and a proton gradient subsequently used for ATP formation. It consists of a core antenna complex that captures photons, and an electron transfer chain that converts photonic excitation into a charge separation. This subunit is found at the monomer-monomer interface and is required for correct PSII assembly and/or dimerization. The chain is Photosystem II reaction center protein L from Synechococcus sp. (strain JA-3-3Ab) (Cyanobacteria bacterium Yellowstone A-Prime).